The primary structure comprises 388 residues: Chorismate synthase (388 aa).

NADP(+)-binding residues include Arg39 and Arg45. Residues 130–132 (RSS), 251–252 (NA), Gly296, 311–315 (KPIPT), and Arg337 contribute to the FMN site.

This sequence belongs to the chorismate synthase family. As to quaternary structure, homotetramer. Requires FMNH2 as cofactor.

It carries out the reaction 5-O-(1-carboxyvinyl)-3-phosphoshikimate = chorismate + phosphate. The protein operates within metabolic intermediate biosynthesis; chorismate biosynthesis; chorismate from D-erythrose 4-phosphate and phosphoenolpyruvate: step 7/7. Catalyzes the anti-1,4-elimination of the C-3 phosphate and the C-6 proR hydrogen from 5-enolpyruvylshikimate-3-phosphate (EPSP) to yield chorismate, which is the branch point compound that serves as the starting substrate for the three terminal pathways of aromatic amino acid biosynthesis. This reaction introduces a second double bond into the aromatic ring system. The protein is Chorismate synthase of Streptococcus pyogenes serotype M2 (strain MGAS10270).